Here is a 263-residue protein sequence, read N- to C-terminus: UPF0739 protein C1orf74 homolog (263 aa).

The protein belongs to the UPF0739 family.

The protein is UPF0739 protein C1orf74 homolog of Bos taurus (Bovine).